The following is a 627-amino-acid chain: MSAQQQKNLSESAQVDQQSVQPFPRSQKVYVQGSRPDIRVPMREISLDVTPTDFGGEINAPVTVYDTSGPYTDPNVTIDVRKGLSDVRSAWIEDRGDTEKLPGLSSEFGQRRLNDAELSAMRFAHVRNPRRARAGHNVSQMHYAKKGIITPEMEFVAIRENMKLAEAREAGLLNEQHAGHSFGASIPKEITPEFVRSEVARGRAIIPANINHVELEPMIIGRNFLVKINGNIGNSALGSSIEEEVAKLTWGIRWGSDTVMDLSTGKHIHETREWIIRNSPVPIGTVPIYQALEKVGGIAEDLTWELFRDTLIEQAEQGVDYFTIHAGVLLRYVPLTAKRVTGIVSRGGSIMAKWCLAHHKENFLYTHFEDICEIMKAYDVSFSLGDGLRPGSIADANDAAQFGELETLGELTKIAWKHDVQCMIEGPGHVPMQLIKENMDKQLECCDEAPFYTLGPLTTDIAPGYDHITSGIGAAMIGWFGCAMLCYVTPKEHLGLPNKDDVKTGIITYKIAAHAADLAKGHPGAQIRDNALSKARFEFRWEDQFNLGLDPDTARAFHDETLPKDSAKVAHFCSMCGPKFCSMKITQEVRDYAKEQRIDAVDLDAEQGMQAKAAEFKAQGSQLYQKV.

A compositionally biased stretch (polar residues) spans 1 to 21; sequence MSAQQQKNLSESAQVDQQSVQ. Positions 1 to 32 are disordered; it reads MSAQQQKNLSESAQVDQQSVQPFPRSQKVYVQ. Substrate is bound by residues Asn231, Met260, Tyr289, His325, 345–347, 386–389, and Glu425; these read SRG and DGLR. His429 contacts Zn(2+). Position 452 (Tyr452) interacts with substrate. Position 493 (His493) interacts with Zn(2+). Cys573, Cys576, and Cys581 together coordinate [4Fe-4S] cluster.

It belongs to the ThiC family. Homodimer. [4Fe-4S] cluster serves as cofactor.

The catalysed reaction is 5-amino-1-(5-phospho-beta-D-ribosyl)imidazole + S-adenosyl-L-methionine = 4-amino-2-methyl-5-(phosphooxymethyl)pyrimidine + CO + 5'-deoxyadenosine + formate + L-methionine + 3 H(+). It functions in the pathway cofactor biosynthesis; thiamine diphosphate biosynthesis. Functionally, catalyzes the synthesis of the hydroxymethylpyrimidine phosphate (HMP-P) moiety of thiamine from aminoimidazole ribotide (AIR) in a radical S-adenosyl-L-methionine (SAM)-dependent reaction. This Ectopseudomonas mendocina (strain ymp) (Pseudomonas mendocina) protein is Phosphomethylpyrimidine synthase.